Consider the following 290-residue polypeptide: Glucuronoxylan 4-O-methyltransferase 2 (290 aa).

The chain crosses the membrane as a helical span at residues 8–28; sequence FISSKLIFICCSILVLFILFL.

This sequence belongs to the methyltransferase superfamily. In terms of tissue distribution, expressed in roots, rosette leaves and stems.

It localises to the golgi apparatus membrane. The enzyme catalyses glucuronoxylan D-glucuronate + n S-adenosyl-L-methionine = glucuronoxylan 4-O-methyl-D-glucuronate + n S-adenosyl-L-homocysteine + n H(+). In terms of biological role, methyltransferase catalyzing 4-O-methylation of glucuronic acid side chains on xylan. The protein is Glucuronoxylan 4-O-methyltransferase 2 (GXM2) of Arabidopsis thaliana (Mouse-ear cress).